We begin with the raw amino-acid sequence, 168 residues long: Zinc-finger homeodomain protein 14 (168 aa).

The ZF-HD dimerization-type; degenerate zinc finger occupies 7–51 (YRECMRNHAAKLGSYAIDGCREYSQPSTGDLCVACGCHRSYHRRI). The stretch at 76–103 (ARLKWKTAEERNEEEEDDTEETSTEEKM) forms a coiled coil. The interval 82–112 (TAEERNEEEEDDTEETSTEEKMTVQRRRKSK) is disordered. Over residues 86-98 (RNEEEEDDTEETS) the composition is skewed to acidic residues. Positions 106 to 168 (QRRRKSKFTA…WVNNNKKFYH (63 aa)) form a DNA-binding region, homeobox.

As to quaternary structure, homo- and heterodimer with other ZFHD proteins. Interacts with ZHD11. As to expression, mostly expressed in flowers and stems.

It is found in the nucleus. Functionally, putative transcription factor. In Arabidopsis thaliana (Mouse-ear cress), this protein is Zinc-finger homeodomain protein 14 (ZHD14).